A 373-amino-acid polypeptide reads, in one-letter code: GDP-mannose 4,6-dehydratase (373 aa).

NADP(+) is bound by residues 10-15, 65-66, 87-91, and Y102; these read GITGQD, DL, and LGAQS. T134 is a catalytic residue. Active-site nucleophile residues include E136 and Y158. NADP(+)-binding residues include K162, H188, and R193.

The protein belongs to the NAD(P)-dependent epimerase/dehydratase family. GDP-mannose 4,6-dehydratase subfamily. Requires NADP(+) as cofactor.

The enzyme catalyses GDP-alpha-D-mannose = GDP-4-dehydro-alpha-D-rhamnose + H2O. Functionally, catalyzes the conversion of GDP-D-mannose to GDP-4-dehydro-6-deoxy-D-mannose. The polypeptide is GDP-mannose 4,6-dehydratase (Vibrio cholerae serotype O1 (strain ATCC 39315 / El Tor Inaba N16961)).